An 807-amino-acid chain; its full sequence is Glycerol-3-phosphate acyltransferase (807 aa).

An HXXXXD motif motif is present at residues 308–313 (CHRSHM).

It belongs to the GPAT/DAPAT family.

Its subcellular location is the cell inner membrane. The catalysed reaction is sn-glycerol 3-phosphate + an acyl-CoA = a 1-acyl-sn-glycero-3-phosphate + CoA. The protein operates within phospholipid metabolism; CDP-diacylglycerol biosynthesis; CDP-diacylglycerol from sn-glycerol 3-phosphate: step 1/3. The chain is Glycerol-3-phosphate acyltransferase from Shewanella baltica (strain OS155 / ATCC BAA-1091).